A 507-amino-acid polypeptide reads, in one-letter code: Acetylcholine receptor subunit beta-type lev-1 (507 aa).

Residues 1-31 (MMLGGGGGCGAGGTWLGFLVFLAVSLRNHST) form the signal peptide. 3 N-linked (GlcNAc...) asparagine glycosylation sites follow: Asn-28, Asn-58, and Asn-109. The Extracellular segment spans residues 32–138 (CEDIDAEDRL…NNADGNYEVS (107 aa)). The helical transmembrane segment at 139-159 (FMCNVLILSTGTVLWVPPAIY) threads the bilayer. An intrachain disulfide couples Cys-163 to Cys-177. Transmembrane regions (helical) follow at residues 243-263 (VVLI…FYLP), 271-291 (GLTM…SKIL), and 305-325 (LLLT…ICNI). Residues 373–392 (GPSVEENPMRSGEHHPLCRH) form a disordered region. Residues 379–392 (NPMRSGEHHPLCRH) show a composition bias toward basic and acidic residues. The chain crosses the membrane as a helical span at residues 454–474 (FLLYGFFGATVGGTIGIIFTA).

Belongs to the ligand-gated ion channel (TC 1.A.9) family. Acetylcholine receptor (TC 1.A.9.1) subfamily. As to quaternary structure, interacts with unc-29. Component of nicotinic acetylcholine receptor composed of 2 non-alpha subunits lev-1 and unc-29, and 3 alpha subunits unc-38, unc-63 and lev-8.

It is found in the postsynaptic cell membrane. Its subcellular location is the cell membrane. Non-alpha subunit of nicotinic acetylcholine receptor (nAChR). Involved in nAChR sensitivity to nicotine. The sequence is that of Acetylcholine receptor subunit beta-type lev-1 (lev-1) from Caenorhabditis elegans.